The chain runs to 354 residues: Uroporphyrinogen decarboxylase (354 aa).

Substrate-binding positions include 27–31 (RQAGR), D77, Y153, T208, and H326.

It belongs to the uroporphyrinogen decarboxylase family. Homodimer.

The protein localises to the cytoplasm. It carries out the reaction uroporphyrinogen III + 4 H(+) = coproporphyrinogen III + 4 CO2. Its pathway is porphyrin-containing compound metabolism; protoporphyrin-IX biosynthesis; coproporphyrinogen-III from 5-aminolevulinate: step 4/4. Catalyzes the decarboxylation of four acetate groups of uroporphyrinogen-III to yield coproporphyrinogen-III. This Neisseria meningitidis serogroup C (strain 053442) protein is Uroporphyrinogen decarboxylase.